The sequence spans 502 residues: MTEKKYIVALDQGTTSSRAVVMNHDANIISVSQREFEQIYPKPGWVEHDPMEIWATQSSTLVEVLAKADISSDQIAAIGITNQRETTIVWEKETGKPIYNAIVWQCRRTAEICEHLKRDGLEDYIRSNTGLVIDPYFSGTKVKWILDHVEGSRERARRGELLFGTVDTWLIWKMTQGRVHVTDYTNASRTMLFNIHTLDWDDKMLEVLDIPREMLPEVRRSSEVYGQTNIGGKGGTRIPISGIAGDQQAALFGQLCVKEGMAKNTYGTGCFMLMNTGEKAVKSENGLLTTIACGPTGEVNYALEGAVFMAGASIQWLRDEMKLINDAYDSEYFATKVQNTNGVYVVPAFTGLGAPYWDPYARGAIFGLTRGVNANHIIRATLESIAYQTRDVLEAMQADSGIRLHALRVDGGAVANNFLMQFQSDILGTRVERPEVREVTALGAAYLAGLAVGFWQNLDELQEKAVIEREFRPGIETTERNYRYAGWKKAVKRAMAWEEHDE.

Residue threonine 14 participates in ADP binding. ATP is bound by residues threonine 14, threonine 15, and serine 16. Threonine 14 serves as a coordination point for sn-glycerol 3-phosphate. ADP is bound at residue arginine 18. The sn-glycerol 3-phosphate site is built by arginine 84, glutamate 85, tyrosine 136, and aspartate 246. Positions 84, 85, 136, 246, and 247 each coordinate glycerol. Threonine 268 and glycine 311 together coordinate ADP. The ATP site is built by threonine 268, glycine 311, glutamine 315, and glycine 412. 2 residues coordinate ADP: glycine 412 and asparagine 416.

This sequence belongs to the FGGY kinase family. As to quaternary structure, homotetramer and homodimer (in equilibrium). Heterodimer with EIIA-Glc. Binds 1 zinc ion per glycerol kinase EIIA-Glc dimer. The zinc ion is important for dimerization.

The enzyme catalyses glycerol + ATP = sn-glycerol 3-phosphate + ADP + H(+). Its pathway is polyol metabolism; glycerol degradation via glycerol kinase pathway; sn-glycerol 3-phosphate from glycerol: step 1/1. Its activity is regulated as follows. Activity of this regulatory enzyme is affected by several metabolites. Allosterically and non-competitively inhibited by fructose 1,6-bisphosphate (FBP) and unphosphorylated phosphocarrier protein EIIA-Glc (III-Glc), an integral component of the bacterial phosphotransferase (PTS) system. In terms of biological role, key enzyme in the regulation of glycerol uptake and metabolism. Catalyzes the phosphorylation of glycerol to yield sn-glycerol 3-phosphate. The polypeptide is Glycerol kinase (Shigella dysenteriae serotype 1 (strain Sd197)).